Consider the following 594-residue polypeptide: Proteasome-associated ATPase (594 aa).

The segment covering 1-10 (MMETPNNDSS) has biased composition (polar residues). Positions 1 to 23 (MMETPNNDSSRTPDEAAGAPDPE) are disordered. Residues 35-86 (ADRQVNILRDKLRHIDRQLAAATQNNSKLVGMLETAKAEILRLKNALDQEGQ) adopt a coiled-coil conformation. ATP is bound at residue 282–287 (GCGKTL). The docks into pockets in the proteasome alpha-ring stretch occupies residues 593-594 (YL).

The protein belongs to the AAA ATPase family. As to quaternary structure, homohexamer. Assembles into a hexameric ring structure that caps the 20S proteasome core. Strongly interacts with the prokaryotic ubiquitin-like protein Pup through a hydrophobic interface; the interacting region of ARC lies in its N-terminal coiled-coil domain. There is one Pup binding site per ARC hexamer ring. Upon ATP-binding, the C-terminus of ARC interacts with the alpha-rings of the proteasome core, possibly by binding to the intersubunit pockets.

Its pathway is protein degradation; proteasomal Pup-dependent pathway. In terms of biological role, ATPase which is responsible for recognizing, binding, unfolding and translocation of pupylated proteins into the bacterial 20S proteasome core particle. May be essential for opening the gate of the 20S proteasome via an interaction with its C-terminus, thereby allowing substrate entry and access to the site of proteolysis. Thus, the C-termini of the proteasomal ATPase may function like a 'key in a lock' to induce gate opening and therefore regulate proteolysis. This is Proteasome-associated ATPase from Arthrobacter sp. (strain FB24).